The following is a 257-amino-acid chain: Transcription factor MYB4 (257 aa).

HTH myb-type domains are found at residues 9-61 and 62-116; these read KMGL…INYL and RPDI…KKRL. DNA-binding regions (H-T-H motif) lie at residues 37 to 61 and 89 to 112; these read WRAL…INYL and WSAI…HTHL. The disordered stretch occupies residues 115–179; that stretch reads RLDAPAQGGH…VAEEHGNAGI (65 aa). The span at 130–140 shows a compositional bias: basic residues; the sequence is GKKHKKPKSAK. Positions 141-170 are enriched in low complexity; that stretch reads KPAAAAAAPPASPERSASSSVTESSMASSV.

It localises to the nucleus. Functionally, transcriptional activator involved in cold stress response. Regulates positively the expression of genes involved in reactive oxygen species (ROS) scavenging such as peroxidase and superoxide dismutase during cold stress. Transactivates a complex gene network that have major effects on stress tolerance and panicle development. The polypeptide is Transcription factor MYB4 (Oryza sativa subsp. japonica (Rice)).